The primary structure comprises 531 residues: UDP-glucuronosyltransferase 1A6 (531 aa).

Positions 1–26 (MACLLPAAQTLPAGFLFLVLWASVLG) are cleaved as a signal peptide. Residues N293 and N431 are each glycosylated (N-linked (GlcNAc...) asparagine). A helical transmembrane segment spans residues 489–505 (VIGFLLAIVLTVVFIVF).

It belongs to the UDP-glycosyltransferase family. As to expression, expressed in liver, kidney and at very low levels in colon.

Its subcellular location is the microsome. It localises to the endoplasmic reticulum membrane. The catalysed reaction is glucuronate acceptor + UDP-alpha-D-glucuronate = acceptor beta-D-glucuronoside + UDP + H(+). It carries out the reaction (5Z,8Z,11Z,14Z)-eicosatetraenoate + UDP-alpha-D-glucuronate = O-[(5Z),(8Z),(11Z),(14Z)-eicosatetraenoyl]-beta-D-glucuronate + UDP. The enzyme catalyses 15-hydroxy-(5Z,8Z,11Z,13E)-eicosatetraenoate + UDP-alpha-D-glucuronate = 15-O-(beta-D-glucuronosyl)-(5Z,8Z,11Z,14Z)-eicosatetraenoate + UDP + H(+). It catalyses the reaction (E)-ferulate + UDP-alpha-D-glucuronate = (E)-4-O-(beta-D-glucuronosyl)-ferulate + UDP + H(+). The catalysed reaction is (E)-ferulate + UDP-alpha-D-glucuronate = (E)-ferulic acid beta-D-glucuronate ester + UDP. In terms of biological role, UDP-glucuronosyltransferase (UGT) that catalyzes phase II biotransformation reactions in which lipophilic substrates are conjugated with glucuronic acid to facilitate their inactivation and excretion from the body. Essential for the elimination and detoxification of drugs, xenobiotics and endogenous compounds. Involved in the glucuronidation of arachidonic acid (AA) and AA-derived eicosanoids including 15-HETE and 20-HETE. Conjugates small planar phenolic molecules such as 4-nitrophenol, 1-naphthol, and 4-methylumbelliferone. The bulky phenol 4-hydroxybiphenyl, androgens and estrogens are not substrates. 2-hydroxybiphenyl is an excellent substrate. Involved in the glucuronidation of the phytochemical ferulic acid at the phenolic or the carboxylic acid group. In Mus musculus (Mouse), this protein is UDP-glucuronosyltransferase 1A6.